A 212-amino-acid polypeptide reads, in one-letter code: Uridine kinase (212 aa).

13-20 (GASASGKS) serves as a coordination point for ATP.

It belongs to the uridine kinase family.

The protein resides in the cytoplasm. The enzyme catalyses uridine + ATP = UMP + ADP + H(+). The catalysed reaction is cytidine + ATP = CMP + ADP + H(+). The protein operates within pyrimidine metabolism; CTP biosynthesis via salvage pathway; CTP from cytidine: step 1/3. Its pathway is pyrimidine metabolism; UMP biosynthesis via salvage pathway; UMP from uridine: step 1/1. This is Uridine kinase from Shewanella baltica (strain OS223).